Consider the following 1040-residue polypeptide: DNA mismatch repair protein MutS (1040 aa).

Residues 1–10 are compositionally biased toward polar residues; the sequence is MPVKPSAQNN. Disordered stretches follow at residues 1 to 22 and 130 to 157; these read MPVK…SVPV and ATGT…SKST. Residues 11 to 22 are compositionally biased toward low complexity; that stretch reads SPSKPTSKSVPV. Residues 130–143 are compositionally biased toward polar residues; it reads ATGTDNANNPSNAP. Residue 759–766 participates in ATP binding; the sequence is GPNMGGKS.

Belongs to the DNA mismatch repair MutS family.

In terms of biological role, this protein is involved in the repair of mismatches in DNA. It is possible that it carries out the mismatch recognition step. This protein has a weak ATPase activity. In Psychrobacter cryohalolentis (strain ATCC BAA-1226 / DSM 17306 / VKM B-2378 / K5), this protein is DNA mismatch repair protein MutS.